A 643-amino-acid polypeptide reads, in one-letter code: Threonine--tRNA ligase (643 aa).

Positions 1–61 (MPIITLPDGS…EQDATLEIIT (61 aa)) constitute a TGS domain. The tract at residues 243–534 (DHRKIGKALD…ITEEYAGFFP (292 aa)) is catalytic. Residues C334, H385, and H511 each contribute to the Zn(2+) site.

This sequence belongs to the class-II aminoacyl-tRNA synthetase family. In terms of assembly, homodimer. It depends on Zn(2+) as a cofactor.

It is found in the cytoplasm. It catalyses the reaction tRNA(Thr) + L-threonine + ATP = L-threonyl-tRNA(Thr) + AMP + diphosphate + H(+). Functionally, catalyzes the attachment of threonine to tRNA(Thr) in a two-step reaction: L-threonine is first activated by ATP to form Thr-AMP and then transferred to the acceptor end of tRNA(Thr). Also edits incorrectly charged L-seryl-tRNA(Thr). This is Threonine--tRNA ligase from Haemophilus influenzae (strain 86-028NP).